The sequence spans 97 residues: Cysteine-rich and transmembrane domain-containing protein 1 (97 aa).

Pro residues predominate over residues 1-40; sequence MNQENPPPYPGPGPTAPYPPYPPQPMGPGPMGGPYPPPQG. The segment at 1–61 is disordered; it reads MNQENPPPYP…QGGPQEPPKT (61 aa). Low complexity predominate over residues 41-50; that stretch reads YPYQGYPQYG. The chain crosses the membrane as a helical span at residues 74–91; that stretch reads LGPSTCLTACWTALCCCC.

The protein belongs to the CYSTM1 family.

Its subcellular location is the membrane. This is Cysteine-rich and transmembrane domain-containing protein 1 (CYSTM1) from Homo sapiens (Human).